Consider the following 576-residue polypeptide: TOX high mobility group box family member 3 (576 aa).

3 disordered regions span residues asparagine 189–proline 258, threonine 422–methionine 443, and leucine 519–serine 563. The span at alanine 204–serine 215 shows a compositional bias: low complexity. Residues glutamate 223 to lysine 239 are compositionally biased toward basic and acidic residues. A compositionally biased stretch (basic residues) spans lysine 240 to lysine 250. The segment at residues proline 255–arginine 323 is a DNA-binding region (HMG box). Low complexity predominate over residues proline 428–methionine 443. A compositionally biased stretch (polar residues) spans proline 528–serine 542. Residues serine 549 to serine 563 show a composition bias toward low complexity.

In terms of assembly, homodimer. Interacts with CREB1; the interaction is not depolarization dependent. Interacts with CREBBP (via C-terminus). Interacts (via HGM box) with CITED1 (via C-terminus); the interaction increases estrogen-response element (ERE)-dependent transcription and protection against cell death. Interacts with CREB1 (phosphorylated form). Expressed mainly in epithelial cells. Expressed in the central nervous system (CNS), in the ileum and within the brain in the frontal and occipital lobe.

The protein localises to the nucleus. Transcriptional coactivator of the p300/CBP-mediated transcription complex. Activates transactivation through cAMP response element (CRE) sites. Protects against cell death by inducing antiapoptotic and repressing pro-apoptotic transcripts. Stimulates transcription from the estrogen-responsive or BCL-2 promoters. Required for depolarization-induced transcription activation of the C-FOS promoter in neurons. Associates with chromatin to the estrogen-responsive C3 promoter region. The chain is TOX high mobility group box family member 3 (TOX3) from Homo sapiens (Human).